Consider the following 453-residue polypeptide: Cytochrome P450 monooxygenase PC-20 (453 aa).

Transmembrane regions (helical) follow at residues 5–25 (LGPF…LCVI) and 49–69 (LGVV…LFCV). A heme-binding site is contributed by C387.

This sequence belongs to the cytochrome P450 family. Heme serves as cofactor.

It localises to the membrane. It participates in secondary metabolite biosynthesis. Its function is as follows. Cytochrome P450 monooxygenase; part of the gene cluster that mediates the biosynthesis of the indole diterpenes penitrems. The geranylgeranyl diphosphate (GGPP) synthase penG catalyzes the first step in penitrem biosynthesis via conversion of farnesyl pyrophosphate and isopentyl pyrophosphate into geranylgeranyl pyrophosphate (GGPP). Condensation of indole-3-glycerol phosphate with GGPP by the prenyl transferase penC then forms 3-geranylgeranylindole (3-GGI). Epoxidation by the FAD-dependent monooxygenase penM leads to a epoxidized-GGI that is substrate of the terpene cyclase penB for cyclization to yield paspaline. Paspaline is subsequently converted to 13-desoxypaxilline by the cytochrome P450 monooxygenase penP, the latter being then converted to paxilline by the cytochrome P450 monooxygenase penQ. Paxilline is converted to beta-paxitriol via C-10 ketoreduction by the short-chain dehydrogenase PC-15 which can be monoprenylated at the C-20 by the indole diterpene prenyltransferase penD. A two-step elimination (acetylation and elimination) process performed by the O-acetyltransferase PC-16 and the P.simplicissimum ptmI-ortholog not yet identified in P.crustosum, leads to the production of the prenylated form of penijanthine. The FAD-linked oxidoreductase ptmO then converts the prenylated form of penijanthine into PC-M5 which is in turn transformed into PC-M4 by the aromatic dimethylallyltransferase PC-22. A series of oxidation steps involving 4 cytochrome P450 monooxygenases (PC-21, PC-05, PC-23, PC-20) and a FAD-dependent monooxygenase (PC-14) are required for the transformation of PC-M4 to penitrems A and E. Synthesis of these final products is proposed to proceed via penitrems D and C (PC-21, PC-05, PC-14) and penitrems B and F (PC-21, PC-05, PC-14, PC-23). This chain is Cytochrome P450 monooxygenase PC-20, found in Penicillium crustosum (Blue mold fungus).